A 220-amino-acid chain; its full sequence is Large ribosomal subunit protein uL16 (220 aa).

Belongs to the universal ribosomal protein uL16 family. As to quaternary structure, component of the small ribosomal subunit. Mature ribosomes consist of a small (40S) and a large (60S) subunit. The 40S subunit contains about 33 different proteins and 1 molecule of RNA (18S). The 60S subunit contains about 49 different proteins and 3 molecules of RNA (25S, 5.8S and 5S).

This chain is Large ribosomal subunit protein uL16 (RPL10), found in Euphorbia esula (Leafy spurge).